The following is a 338-amino-acid chain: Lipoate-protein ligase A (338 aa).

Residues 29 to 216 (PATQRVLFLW…AFFAHYGERV (188 aa)) form the BPL/LPL catalytic domain. ATP-binding positions include Arg-71, 76 to 79 (GAVF), and Lys-134. Residue Lys-134 participates in (R)-lipoate binding.

It belongs to the LplA family. As to quaternary structure, monomer.

It is found in the cytoplasm. It catalyses the reaction L-lysyl-[lipoyl-carrier protein] + (R)-lipoate + ATP = N(6)-[(R)-lipoyl]-L-lysyl-[lipoyl-carrier protein] + AMP + diphosphate + H(+). It functions in the pathway protein modification; protein lipoylation via exogenous pathway; protein N(6)-(lipoyl)lysine from lipoate: step 1/2. Its pathway is protein modification; protein lipoylation via exogenous pathway; protein N(6)-(lipoyl)lysine from lipoate: step 2/2. Catalyzes both the ATP-dependent activation of exogenously supplied lipoate to lipoyl-AMP and the transfer of the activated lipoyl onto the lipoyl domains of lipoate-dependent enzymes. This chain is Lipoate-protein ligase A, found in Escherichia coli O81 (strain ED1a).